The primary structure comprises 227 residues: Cytochrome c oxidase subunit 2 (227 aa).

The Mitochondrial intermembrane segment spans residues 1-14; that stretch reads MAYPFQLGLQDATS. The chain crosses the membrane as a helical span at residues 15-45; the sequence is PIMEELLHFHDHTLMIVFLISSLVLYIISLM. Residues 46-59 are Mitochondrial matrix-facing; the sequence is LTTKLTHTSTMDAQ. A helical transmembrane segment spans residues 60–87; that stretch reads EVETVWTILPAIILILIALPSLRILYMM. At 88 to 227 the chain is on the mitochondrial intermembrane side; sequence DEINNPSLTV…YFETWSAVMV (140 aa). Cu cation is bound by residues H161, C196, E198, C200, H204, and M207. Mg(2+) is bound at residue E198. Position 218 is a phosphotyrosine (Y218).

Belongs to the cytochrome c oxidase subunit 2 family. As to quaternary structure, component of the cytochrome c oxidase (complex IV, CIV), a multisubunit enzyme composed of 14 subunits. The complex is composed of a catalytic core of 3 subunits MT-CO1, MT-CO2 and MT-CO3, encoded in the mitochondrial DNA, and 11 supernumerary subunits COX4I, COX5A, COX5B, COX6A, COX6B, COX6C, COX7A, COX7B, COX7C, COX8 and NDUFA4, which are encoded in the nuclear genome. The complex exists as a monomer or a dimer and forms supercomplexes (SCs) in the inner mitochondrial membrane with NADH-ubiquinone oxidoreductase (complex I, CI) and ubiquinol-cytochrome c oxidoreductase (cytochrome b-c1 complex, complex III, CIII), resulting in different assemblies (supercomplex SCI(1)III(2)IV(1) and megacomplex MCI(2)III(2)IV(2)). Found in a complex with TMEM177, COA6, COX18, COX20, SCO1 and SCO2. Interacts with TMEM177 in a COX20-dependent manner. Interacts with COX20. Interacts with COX16. It depends on Cu cation as a cofactor.

Its subcellular location is the mitochondrion inner membrane. The enzyme catalyses 4 Fe(II)-[cytochrome c] + O2 + 8 H(+)(in) = 4 Fe(III)-[cytochrome c] + 2 H2O + 4 H(+)(out). Functionally, component of the cytochrome c oxidase, the last enzyme in the mitochondrial electron transport chain which drives oxidative phosphorylation. The respiratory chain contains 3 multisubunit complexes succinate dehydrogenase (complex II, CII), ubiquinol-cytochrome c oxidoreductase (cytochrome b-c1 complex, complex III, CIII) and cytochrome c oxidase (complex IV, CIV), that cooperate to transfer electrons derived from NADH and succinate to molecular oxygen, creating an electrochemical gradient over the inner membrane that drives transmembrane transport and the ATP synthase. Cytochrome c oxidase is the component of the respiratory chain that catalyzes the reduction of oxygen to water. Electrons originating from reduced cytochrome c in the intermembrane space (IMS) are transferred via the dinuclear copper A center (CU(A)) of subunit 2 and heme A of subunit 1 to the active site in subunit 1, a binuclear center (BNC) formed by heme A3 and copper B (CU(B)). The BNC reduces molecular oxygen to 2 water molecules using 4 electrons from cytochrome c in the IMS and 4 protons from the mitochondrial matrix. This is Cytochrome c oxidase subunit 2 (MT-CO2) from Lycalopex culpaeus (Culpeo fox).